Here is a 324-residue protein sequence, read N- to C-terminus: uncharacterized protein (324 aa).

Belongs to the mgp1/MG371 family.

This is an uncharacterized protein from Mycoplasma genitalium (strain ATCC 33530 / DSM 19775 / NCTC 10195 / G37) (Mycoplasmoides genitalium).